A 198-amino-acid polypeptide reads, in one-letter code: Ribosome maturation factor RimM (198 aa).

The PRC barrel domain maps to aspartate 92–glutamate 168. Acidic residues predominate over residues alanine 163–serine 172. Residues alanine 163–proline 198 are disordered.

It belongs to the RimM family. As to quaternary structure, binds ribosomal protein uS19.

The protein resides in the cytoplasm. Its function is as follows. An accessory protein needed during the final step in the assembly of 30S ribosomal subunit, possibly for assembly of the head region. Essential for efficient processing of 16S rRNA. May be needed both before and after RbfA during the maturation of 16S rRNA. It has affinity for free ribosomal 30S subunits but not for 70S ribosomes. In Bradyrhizobium sp. (strain BTAi1 / ATCC BAA-1182), this protein is Ribosome maturation factor RimM.